A 505-amino-acid polypeptide reads, in one-letter code: Monocarboxylate transporter 10 (505 aa).

Positions 1 to 14 (MTEPEPTLEQEPTP) are enriched in acidic residues. A disordered region spans residues 1–64 (MTEPEPTLEQ…EQKSPEEFEP (64 aa)). Residues 1-66 (MTEPEPTLEQ…KSPEEFEPPE (66 aa)) are Cytoplasmic-facing. Pro residues predominate over residues 15–31 (EPEPTQEPTPEPTPEPE). Over residues 32–41 (PTQEPESEPE) the composition is skewed to acidic residues. A helical membrane pass occupies residues 67-87 (GGWGWVVMLASMWCNGSVFGI). Over 88–114 (QNAFGIMFVYLLNEFGSEHDADLRFKT) the chain is Extracellular. Residues 115–135 (AWVGSLSMGMIFFCSPIVSVF) traverse the membrane as a helical segment. Topologically, residues 136 to 142 (TDLLGCR) are cytoplasmic. The chain crosses the membrane as a helical span at residues 143-163 (ITAVGGAAVGCVGLLASSFVT). Residues 164-171 (SLGPMYFT) are Extracellular-facing. A helical membrane pass occupies residues 172–192 (YGIVFACGCSFAYQPSLVILG). Over 193-204 (HYFKRRLGLVNG) the chain is Cytoplasmic. The helical transmembrane segment at 205–225 (IVTAGSSVFTITLPYMLSGLL) threads the bilayer. At 226 to 235 (KSVGLYHTLR) the chain is on the extracellular side. The chain crosses the membrane as a helical span at residues 236-256 (VLAIFMFILMLAGLTYKPLLP). Over 257 to 286 (KPVSSSKPGSRCPPLSRIFNVNIWKSLGYR) the chain is Cytoplasmic. The chain crosses the membrane as a helical span at residues 287–307 (IWAFGIPAALYGYFVPYVHLM). Residues 308-321 (THVEERFGPEANKE) are Extracellular-facing. A helical membrane pass occupies residues 322–342 (VLLACIGITSGVGRLIFGRVA). A topological domain (cytoplasmic) is located at residue Asp343. A helical membrane pass occupies residues 344 to 364 (YVPGVNKVFLQVSSFMVIGVM). The Extracellular portion of the chain corresponds to 365–377 (SMMIPLCHVFGGL). The helical transmembrane segment at 378-400 (IAVCLLMGLFDGCFICIMAPIAF) threads the bilayer. Residues 401 to 411 (ELVGSQNVSQA) are Cytoplasmic-facing. The chain crosses the membrane as a helical span at residues 412 to 432 (IGFLLGMMSIPMTVGPPIAGF). Topologically, residues 433 to 443 (LRDRLGSYDVA) are extracellular. A helical membrane pass occupies residues 444–464 (FYLAGIPPLIGGAVLCAIPWV). At 465-505 (EARRKRREAANTAENTEKMLESRSPPLEDTVCRTEEPESVI) the chain is on the cytoplasmic side. The segment at 474 to 505 (ANTAENTEKMLESRSPPLEDTVCRTEEPESVI) is disordered. A compositionally biased stretch (basic and acidic residues) spans 494–505 (TVCRTEEPESVI).

It belongs to the major facilitator superfamily. Monocarboxylate porter (TC 2.A.1.13) family.

It is found in the cell membrane. The protein localises to the basolateral cell membrane. It catalyses the reaction L-tryptophan(in) = L-tryptophan(out). The enzyme catalyses L-tyrosine(in) = L-tyrosine(out). It carries out the reaction L-phenylalanine(in) = L-phenylalanine(out). The catalysed reaction is 3,3',5-triiodo-L-thyronine(out) = 3,3',5-triiodo-L-thyronine(in). It catalyses the reaction L-thyroxine(out) = L-thyroxine(in). Functionally, sodium- and proton-independent thyroid hormones and aromatic acids transporter. Mediates both uptake and efflux of 3,5,3'-triiodothyronine (T3) and 3,5,3',5'-tetraiodothyronine (T4) with high affinity, suggesting a role in the homeostasis of thyroid hormone levels. Responsible for low affinity bidirectional transport of the aromatic amino acids, such as phenylalanine, tyrosine, tryptophan and L-3,4-dihydroxyphenylalanine (L-dopa). Plays an important role in homeostasis of aromatic amino acids. This is Monocarboxylate transporter 10 (slc16a10) from Danio rerio (Zebrafish).